The following is a 757-amino-acid chain: RNA-directed RNA polymerase catalytic subunit (757 aa).

A disordered region spans residues 53–82 (GRWTTNTETGAPQLNPIDGPLPEDNEPSGY). The segment covering 55–64 (WTTNTETGAP) has biased composition (polar residues). 2 consecutive short sequence motifs (nuclear localization signal) follow at residues 187 to 195 (RKRRVRDNV) and 203 to 216 (RTIG…NKRS). Positions 249–256 (RGFVYFVE) are promoter-binding site. The RdRp catalytic domain maps to 286-483 (VRKMMTNSQD…GINMSKKKSY (198 aa)).

The protein belongs to the influenza viruses polymerase PB1 family. As to quaternary structure, influenza RNA polymerase is composed of three subunits: PB1, PB2 and PA. Interacts (via N-terminus) with PA (via C-terminus). Interacts (via C-terminus) with PB2 (via N-terminus); this interaction is essential for transcription initiation. Interacts (via C-terminus) with human PKP2 (via N-terminus); the interaction competitively inhibits the interaction between the RNA polymerase subunits PB1 and PB2. Post-translationally, phosphorylated by host PRKCA.

The protein localises to the host nucleus. Its subcellular location is the host cytoplasm. It carries out the reaction RNA(n) + a ribonucleoside 5'-triphosphate = RNA(n+1) + diphosphate. Functionally, RNA-dependent RNA polymerase which is responsible for replication and transcription of virus RNA segments. The transcription of viral mRNAs occurs by a unique mechanism called cap-snatching. 5' methylated caps of cellular mRNAs are cleaved after 10-13 nucleotides by PA. In turn, these short capped RNAs are used as primers by PB1 for transcription of viral mRNAs. During virus replication, PB1 initiates RNA synthesis and copy vRNA into complementary RNA (cRNA) which in turn serves as a template for the production of more vRNAs. This chain is RNA-directed RNA polymerase catalytic subunit, found in Influenza A virus (strain A/Hickox/1940 H1N1).